Reading from the N-terminus, the 296-residue chain is NADH-cytochrome b5 reductase 2-A (296 aa).

Residues 15–35 (FVIGAPTIALCSYYYSSGAFL) traverse the membrane as a helical segment. The FAD-binding FR-type domain occupies 47 to 151 (NNWIDLPISR…KGPIPKWKWV (105 aa)). An FAD-binding site is contributed by 154 to 189 (SFESITLIGGGTGITPLYQLIHAITKNPNDKTKIRL).

The protein belongs to the flavoprotein pyridine nucleotide cytochrome reductase family. FAD is required as a cofactor.

It localises to the mitochondrion outer membrane. It catalyses the reaction 2 Fe(III)-[cytochrome b5] + NADH = 2 Fe(II)-[cytochrome b5] + NAD(+) + H(+). May mediate the reduction of outer membrane cytochrome b5. The chain is NADH-cytochrome b5 reductase 2-A (MCR1A) from Vanderwaltozyma polyspora (strain ATCC 22028 / DSM 70294 / BCRC 21397 / CBS 2163 / NBRC 10782 / NRRL Y-8283 / UCD 57-17) (Kluyveromyces polysporus).